The sequence spans 607 residues: UvrABC system protein C (607 aa).

One can recognise a GIY-YIG domain in the interval Gly16–Ile94. The region spanning Asn203–Val238 is the UVR domain.

Belongs to the UvrC family. As to quaternary structure, interacts with UvrB in an incision complex.

The protein localises to the cytoplasm. In terms of biological role, the UvrABC repair system catalyzes the recognition and processing of DNA lesions. UvrC both incises the 5' and 3' sides of the lesion. The N-terminal half is responsible for the 3' incision and the C-terminal half is responsible for the 5' incision. This Pseudomonas protegens (strain DSM 19095 / LMG 27888 / CFBP 6595 / CHA0) protein is UvrABC system protein C.